The chain runs to 298 residues: Probable deoxyhypusine synthase 2 (298 aa).

The active-site Nucleophile is the Lys259.

The protein belongs to the deoxyhypusine synthase family. NAD(+) is required as a cofactor.

The enzyme catalyses [eIF5A protein]-L-lysine + spermidine = [eIF5A protein]-deoxyhypusine + propane-1,3-diamine. Its pathway is protein modification; eIF5A hypusination. Its function is as follows. Catalyzes the NAD-dependent oxidative cleavage of spermidine and the subsequent transfer of the butylamine moiety of spermidine to the epsilon-amino group of a specific lysine residue of the eIF-5A precursor protein to form the intermediate deoxyhypusine residue. This is Probable deoxyhypusine synthase 2 (dys2) from Archaeoglobus fulgidus (strain ATCC 49558 / DSM 4304 / JCM 9628 / NBRC 100126 / VC-16).